The primary structure comprises 351 residues: Transmembrane and coiled-coil domain-containing protein 5B (351 aa).

Residues 17 to 214 (EIPKLEITKQ…WRSSIQSAKT (198 aa)) are a coiled coil. A helical transmembrane segment spans residues 292–312 (IFVVMIFFRLLGYVLFYLQYI).

It belongs to the TMCO5 family.

It is found in the membrane. The sequence is that of Transmembrane and coiled-coil domain-containing protein 5B (TMCO5B) from Bos taurus (Bovine).